The chain runs to 343 residues: MNIHRSTPITIARYGRSRNKTQDFEELSSIRSAEPSQSFSPNLGSPSPPETPNLSHCVSCIGKYLLLEPLEGDHVFRAVHLHSGEELVCKVFDISCYQESLAPCFCLSAHSNINQITEIILGETKAYVFFERSYGDMHSFVRTCKKLREEEAARLFYQIASAVAHCHDGGLVLRDLKLRKFIFKDEERTRVKLESLEDAYILRGDDDSLSDKHGCPAYVSPEILNTSGSYSGKAADVWSLGVMLYTMLVGRYPFHDIEPSSLFSKIRRGQFNIPETLSPKAKCLIRSILRREPSERLTSQEILDHPWFSTDFSVSNSGYGAKEVSDQLVPDVNMEENLDPFFN.

The disordered stretch occupies residues Glu-25–Glu-50. A compositionally biased stretch (polar residues) spans Ser-29–Ser-45. The Protein kinase domain maps to Ile-61–Phe-308.

Belongs to the protein kinase superfamily. CAMK Ser/Thr protein kinase family. Tribbles subfamily. As to expression, highly expressed in the thyroid, also present in ovary and cerebrum.

The protein resides in the cytoplasm. It is found in the cytoskeleton. In terms of biological role, interacts with MAPK kinases and regulates activation of MAP kinases. Does not display kinase activity. This Canis lupus familiaris (Dog) protein is Tribbles homolog 2.